Here is a 311-residue protein sequence, read N- to C-terminus: Ribosomal RNA small subunit methyltransferase A (311 aa).

S-adenosyl-L-methionine is bound by residues N29, V31, G56, E77, D107, and N126.

The protein belongs to the class I-like SAM-binding methyltransferase superfamily. rRNA adenine N(6)-methyltransferase family. RsmA subfamily.

The protein resides in the cytoplasm. It catalyses the reaction adenosine(1518)/adenosine(1519) in 16S rRNA + 4 S-adenosyl-L-methionine = N(6)-dimethyladenosine(1518)/N(6)-dimethyladenosine(1519) in 16S rRNA + 4 S-adenosyl-L-homocysteine + 4 H(+). Specifically dimethylates two adjacent adenosines (A1518 and A1519) in the loop of a conserved hairpin near the 3'-end of 16S rRNA in the 30S particle. May play a critical role in biogenesis of 30S subunits. This Mycolicibacterium vanbaalenii (strain DSM 7251 / JCM 13017 / BCRC 16820 / KCTC 9966 / NRRL B-24157 / PYR-1) (Mycobacterium vanbaalenii) protein is Ribosomal RNA small subunit methyltransferase A.